Reading from the N-terminus, the 20-residue chain is DSVGSTTAHKQQNINHLLDK.

The interval 1–20 (DSVGSTTAHKQQNINHLLDK) is disordered.

This sequence belongs to the tyrosinase family. Hemocyanin subfamily. Composed of 3 major subunits (IB, II and III) and 1 minor subunit (IA) which form homohexamers and heterohexamers. May also form larger structures. As to expression, hemolymph.

The protein resides in the secreted. The protein localises to the extracellular space. Its function is as follows. Hemocyanins are copper-containing oxygen carriers occurring freely dissolved in the hemolymph of many mollusks and arthropods. The polypeptide is Hemocyanin subunit Ib (Panulirus japonicus (Japanese spiny lobster)).